A 242-amino-acid polypeptide reads, in one-letter code: Zinc import ATP-binding protein ZnuC (242 aa).

An ABC transporter domain is found at 24-241; the sequence is INVKDLSFAY…EKFLKMFSSY (218 aa). 56–63 lines the ATP pocket; sequence GPNGGGKT.

This sequence belongs to the ABC transporter superfamily. Zinc importer (TC 3.A.1.15.5) family. As to quaternary structure, the complex is composed of two ATP-binding proteins (ZnuC), two transmembrane proteins (ZnuB) and a solute-binding protein (ZnuA).

The protein localises to the cell inner membrane. The enzyme catalyses Zn(2+)(out) + ATP(in) + H2O(in) = Zn(2+)(in) + ADP(in) + phosphate(in) + H(+)(in). In terms of biological role, part of the ABC transporter complex ZnuABC involved in zinc import. Responsible for energy coupling to the transport system. This Ehrlichia ruminantium (strain Gardel) protein is Zinc import ATP-binding protein ZnuC.